The sequence spans 412 residues: DNA utilization protein HofQ (412 aa).

The first 18 residues, 1 to 18, serve as a signal peptide directing secretion; it reads MKQWIAALLLMLIPGVQA.

This sequence belongs to the bacterial secretin family. PilQ subfamily.

The protein resides in the cell outer membrane. In terms of biological role, required for the use of extracellular DNA as a nutrient. Could be the porin responsible for transport of DNA across the outer membrane. The protein is DNA utilization protein HofQ (hofQ) of Escherichia coli (strain K12).